The chain runs to 159 residues: Peptide deformylase (159 aa).

2 residues coordinate Fe cation: C88 and H130. The active site involves E131. A Fe cation-binding site is contributed by H134.

This sequence belongs to the polypeptide deformylase family. It depends on Fe(2+) as a cofactor.

The catalysed reaction is N-terminal N-formyl-L-methionyl-[peptide] + H2O = N-terminal L-methionyl-[peptide] + formate. Its function is as follows. Removes the formyl group from the N-terminal Met of newly synthesized proteins. Requires at least a dipeptide for an efficient rate of reaction. N-terminal L-methionine is a prerequisite for activity but the enzyme has broad specificity at other positions. The chain is Peptide deformylase from Caldanaerobacter subterraneus subsp. tengcongensis (strain DSM 15242 / JCM 11007 / NBRC 100824 / MB4) (Thermoanaerobacter tengcongensis).